The sequence spans 85 residues: U4-theraphotoxin-Hhn1p (85 aa).

The signal sequence occupies residues 1–22 (MKMTLIAIPTCAAVLVLHTTAA). Positions 23–48 (EELEAESQLMEVGMPDTELEAVDGER) are excised as a propeptide. Cystine bridges form between Cys52–Cys66, Cys56–Cys77, and Cys71–Cys82.

The protein belongs to the neurotoxin 12 (Hwtx-2) family. 02 (Hwtx-2) subfamily. In terms of tissue distribution, expressed by the venom gland.

It localises to the secreted. Functionally, postsynaptic neurotoxin. This is U4-theraphotoxin-Hhn1p from Cyriopagopus hainanus (Chinese bird spider).